Here is a 161-residue protein sequence, read N- to C-terminus: MLHIRIVAVGKLKEKYLKEGLREYIKRLGAYSRLEIIEVPDEKVPDKPSDTEAALIKRKEGDRLLAAAGDKDYIGVALDPRGEMWSTEDLADKMRRWELYGPNLVVFFIGGTLGLSKEVHAVCKAKWSLSRLTFPHQLVRLILLEQVYRGCKVNRGETYHR.

Residues Leu-78, Gly-110, and 129-134 contribute to the S-adenosyl-L-methionine site; that span reads LSRLTF.

It belongs to the RNA methyltransferase RlmH family. As to quaternary structure, homodimer.

The protein localises to the cytoplasm. It catalyses the reaction pseudouridine(1915) in 23S rRNA + S-adenosyl-L-methionine = N(3)-methylpseudouridine(1915) in 23S rRNA + S-adenosyl-L-homocysteine + H(+). Specifically methylates the pseudouridine at position 1915 (m3Psi1915) in 23S rRNA. This Heliobacterium modesticaldum (strain ATCC 51547 / Ice1) protein is Ribosomal RNA large subunit methyltransferase H.